The primary structure comprises 441 residues: Arginine biosynthesis bifunctional protein ArgJ, mitochondrial (441 aa).

Positions 177, 204, 215, 301, 436, and 441 each coordinate substrate. Residue T215 is the Nucleophile of the active site.

This sequence belongs to the ArgJ family. Heterodimer of an alpha and a beta chain. Post-translationally, the alpha and beta chains are autoproteolytically processed from a single precursor protein within the mitochondrion.

The protein localises to the mitochondrion matrix. It carries out the reaction N(2)-acetyl-L-ornithine + L-glutamate = N-acetyl-L-glutamate + L-ornithine. It catalyses the reaction L-glutamate + acetyl-CoA = N-acetyl-L-glutamate + CoA + H(+). Its pathway is amino-acid biosynthesis; L-arginine biosynthesis; L-ornithine and N-acetyl-L-glutamate from L-glutamate and N(2)-acetyl-L-ornithine (cyclic): step 1/1. The protein operates within amino-acid biosynthesis; L-arginine biosynthesis; N(2)-acetyl-L-ornithine from L-glutamate: step 1/4. Catalyzes two activities which are involved in the cyclic version of arginine biosynthesis: the synthesis of acetylglutamate from glutamate and acetyl-CoA, and of ornithine by transacetylation between acetylornithine and glutamate. This Candida glabrata (strain ATCC 2001 / BCRC 20586 / JCM 3761 / NBRC 0622 / NRRL Y-65 / CBS 138) (Yeast) protein is Arginine biosynthesis bifunctional protein ArgJ, mitochondrial.